Consider the following 873-residue polypeptide: Bifunctional heparan sulfate N-deacetylase/N-sulfotransferase 3 (873 aa).

Topologically, residues 1–13 (MSFIMKPHRHFQR) are cytoplasmic. A helical; Signal-anchor for type II membrane protein membrane pass occupies residues 14–34 (TLILLATFCMVSIIISAYYLY). Residues 35 to 873 (SGYKQESEVS…WLRQELQKVR (839 aa)) lie on the Lumenal side of the membrane. The tract at residues 36–589 (GYKQESEVSG…KRHRDIWSKE (554 aa)) is heparan sulfate N-deacetylase 3. N-linked (GlcNAc...) asparagine glycans are attached at residues asparagine 146, asparagine 226, asparagine 342, and asparagine 392. The interval 590–873 (KTCDRLPKFL…WLRQELQKVR (284 aa)) is heparan sulfate N-sulfotransferase 3. The For sulfotransferase activity role is filled by lysine 605. Position 605–609 (605–609 (KTGTT)) interacts with 3'-phosphoadenylyl sulfate. The N-linked (GlcNAc...) asparagine glycan is linked to asparagine 658. Serine 703 is a 3'-phosphoadenylyl sulfate binding site. The N-linked (GlcNAc...) asparagine glycan is linked to asparagine 794. An intrachain disulfide couples cysteine 809 to cysteine 819. 824-828 (KGRKY) is a binding site for 3'-phosphoadenylyl sulfate.

It belongs to the sulfotransferase 1 family. NDST subfamily. As to quaternary structure, monomer. Strongly expressed strongly in brain. Expressed at high level at embryonic day 11 compared to other stages of development. Weakly expressed in adult heart, kidney, muscle, endothelial cells and testis but not in other tissues.

Its subcellular location is the golgi apparatus membrane. It catalyses the reaction alpha-D-glucosaminyl-[heparan sulfate](n) + 3'-phosphoadenylyl sulfate = N-sulfo-alpha-D-glucosaminyl-[heparan sulfate](n) + adenosine 3',5'-bisphosphate + 2 H(+). It functions in the pathway glycan metabolism; heparan sulfate biosynthesis. Its pathway is glycan metabolism; heparin biosynthesis. Its function is as follows. Essential bifunctional enzyme that catalyzes both the N-deacetylation and the N-sulfation of glucosamine (GlcNAc) of the glycosaminoglycan in heparan sulfate. Modifies the GlcNAc-GlcA disaccharide repeating sugar backbone to make N-sulfated heparosan, a prerequisite substrate for later modifications in heparin biosynthesis. Has high deacetylase activity but low sulfotransferase activity. The polypeptide is Bifunctional heparan sulfate N-deacetylase/N-sulfotransferase 3 (Ndst3) (Mus musculus (Mouse)).